The primary structure comprises 341 residues: HTH-type transcriptional repressor PurR (341 aa).

The 55-residue stretch at 2–56 (ATIKDVAKRANVSTTTVSHVINKTRFVAEETRNAVWAAIKELHYSPSAVARSLKV) folds into the HTH lacI-type domain. The H-T-H motif DNA-binding region spans 4–23 (IKDVAKRANVSTTTVSHVIN). A DNA-binding region spans residues 48–56 (SAVARSLKV). Positions 73, 190, 192, 221, and 275 each coordinate hypoxanthine.

In terms of assembly, homodimer.

It functions in the pathway purine metabolism; purine nucleotide biosynthesis [regulation]. Functionally, is the main repressor of the genes involved in the de novo synthesis of purine nucleotides, regulating purB, purC, purEK, purF, purHD, purL, purMN and guaBA expression. PurR is allosterically activated to bind its cognate DNA by binding the purine corepressors, hypoxanthine or guanine, thereby effecting transcription repression. This is HTH-type transcriptional repressor PurR from Klebsiella pneumoniae subsp. pneumoniae (strain ATCC 700721 / MGH 78578).